The following is a 402-amino-acid chain: Acetate kinase (402 aa).

N13 contacts Mg(2+). Residue K20 participates in ATP binding. R94 lines the substrate pocket. D151 (proton donor/acceptor) is an active-site residue. ATP contacts are provided by residues 211–215 (HLGNG), 285–287 (DFR), and 333–337 (GVGEN). Residue E387 participates in Mg(2+) binding.

It belongs to the acetokinase family. Homodimer. Mg(2+) is required as a cofactor. Requires Mn(2+) as cofactor.

The protein localises to the cytoplasm. The enzyme catalyses acetate + ATP = acetyl phosphate + ADP. Its pathway is metabolic intermediate biosynthesis; acetyl-CoA biosynthesis; acetyl-CoA from acetate: step 1/2. Catalyzes the formation of acetyl phosphate from acetate and ATP. Can also catalyze the reverse reaction. The protein is Acetate kinase of Nocardia farcinica (strain IFM 10152).